Consider the following 329-residue polypeptide: Lipoyl synthase (329 aa).

Positions 1–23 are disordered; sequence MTDLTATPAPAEPAASAYDPTAK. Residues C76, C81, C87, C102, C106, C109, and S316 each coordinate [4Fe-4S] cluster. A Radical SAM core domain is found at 87–305; that stretch reads CFGKGTATFM…EEEAYKMGFT (219 aa).

The protein belongs to the radical SAM superfamily. Lipoyl synthase family. It depends on [4Fe-4S] cluster as a cofactor.

Its subcellular location is the cytoplasm. The enzyme catalyses [[Fe-S] cluster scaffold protein carrying a second [4Fe-4S](2+) cluster] + N(6)-octanoyl-L-lysyl-[protein] + 2 oxidized [2Fe-2S]-[ferredoxin] + 2 S-adenosyl-L-methionine + 4 H(+) = [[Fe-S] cluster scaffold protein] + N(6)-[(R)-dihydrolipoyl]-L-lysyl-[protein] + 4 Fe(3+) + 2 hydrogen sulfide + 2 5'-deoxyadenosine + 2 L-methionine + 2 reduced [2Fe-2S]-[ferredoxin]. It participates in protein modification; protein lipoylation via endogenous pathway; protein N(6)-(lipoyl)lysine from octanoyl-[acyl-carrier-protein]: step 2/2. In terms of biological role, catalyzes the radical-mediated insertion of two sulfur atoms into the C-6 and C-8 positions of the octanoyl moiety bound to the lipoyl domains of lipoate-dependent enzymes, thereby converting the octanoylated domains into lipoylated derivatives. The protein is Lipoyl synthase of Burkholderia mallei (strain NCTC 10247).